The sequence spans 1052 residues: SWI/SNF-related matrix-associated actin-dependent regulator of chromatin subfamily A member 5 (1052 aa).

Residues 1 to 15 (MSSAAEPPPPPPPES) show a composition bias toward pro residues. Residues 1 to 83 (MSSAAEPPPP…QEPDPTYEEK (83 aa)) form a disordered region. At Ser-2 the chain carries N-acetylserine. A compositionally biased stretch (low complexity) spans 16-55 (APSKPAASIASGGSNSSNKGGPEGVAAQAVASAASAGPAD). At Ser-66 the chain carries Phosphoserine. The span at 69-83 (KQKEIQEPDPTYEEK) shows a compositional bias: basic and acidic residues. Residue Lys-83 forms a Glycyl lysine isopeptide (Lys-Gly) (interchain with G-Cter in SUMO2) linkage. Position 113 is a phosphothreonine (Thr-113). 3 positions are modified to phosphoserine: Ser-116, Ser-137, and Ser-171. Positions 192–357 (ISLYENGING…WSLLNFLLPD (166 aa)) constitute a Helicase ATP-binding domain. 205–212 (DEMGLGKT) contributes to the ATP binding site. Residues 308 to 311 (DEAH) carry the DEAH box motif. Lys-440 is subject to N6-acetyllysine. One can recognise a Helicase C-terminal domain in the interval 487–638 (VLDKLLPKLK…SIVIQQGRLV (152 aa)). Glycyl lysine isopeptide (Lys-Gly) (interchain with G-Cter in SUMO2) cross-links involve residues Lys-644, Lys-647, Lys-694, Lys-722, and Lys-735. Ser-755 and Ser-825 each carry phosphoserine. 2 SANT domains span residues 840–892 (QGFT…ERCN) and 943–1007 (KGKN…LITL). Lys-966 participates in a covalent cross-link: Glycyl lysine isopeptide (Lys-Gly) (interchain with G-Cter in SUMO2). Positions 1015–1052 (LEEKEKAEKKKRGPKPSTQKRKMDGAPDGRGRKKKLKL) are disordered. Residues 1023-1034 (KKKRGPKPSTQK) are compositionally biased toward basic residues. Residues 1035-1044 (RKMDGAPDGR) are compositionally biased toward basic and acidic residues.

This sequence belongs to the SNF2/RAD54 helicase family. ISWI subfamily. As to quaternary structure, component of the ACF-5 ISWI chromatin-remodeling complex (also called the ACF/WCRF complex) at least composed of SMARCA5/SNF2H and BAZ1A/ACF1, which regulates the spacing of histone octamers on the DNA template to facilitate access to DNA. Within the complex interacts with BAZ1A/ACF1; the interaction is direct and is required to slide nucleosomes from end to center positions on a DNA template in an ATP-dependent manner. Component of the CHRAC ISWI chromatin-remodeling complex at least composed of SMARCA5/SNF2H, BAZ1A/ACF1, CHRAC1 and POLE3; the complex preferentially binds DNA through the CHRAC1-POLE3 heterodimer and possesses ATP-dependent nucleosome-remodeling activity. Within the complex interacts with BAZ1A/ACF1; the interaction is direct and promotes the interaction with the POLE3-CHRAC1 heterodimer. Within the complex interacts with the POLE3-CHRAC1 heterodimer; the interaction is direct and enhances nucleosome sliding activity by the SMARCA5/SNF2H and BAZ1A/ACF1 interaction. Neither POLE3 nor CHRAC1 enhances nucleosome sliding activity of the ACF-5 ISWI chromatin remodeling complex. Component of the WICH-5 ISWI chromatin-remodeling complex (also called the WICH complex) at least composed of SMARCA5/SNF2H and BAZ1B/WSTF, which regulates the spacing of histone octamers on the DNA template to facilitate access to DNA. Within the complex interacts with BAZ1B/WSTF. Component of the NoRC-5 ISWI chromatin-remodeling complex (also called the NoRC chromatin-remodeling complex) at least composed of SMARCA5/SNF2H and BAZ2A/TIP5; the complex suppresses rDNA transcription by a combination of nucleosome remodeling, histone deacetylation, and DNA methylation. Within the complex interacts with BAZ2A/TIP5. Within the complex interacts with HDAC1. Component of the BRF-5 ISWI chromatin-remodeling complex at least composed of SMARCA5/SNF2H and BAZ2B. Within the complex interacts with BAZ2B. Component of the NURF-5 ISWI chromatin-remodeling complex at least composed of SMARCA5/SNF2H and BPTF. Within the complex interacts with BPFT. Component of the CERF-5 ISWI chromatin-remodeling complex at least composed of SMARCA5/SNF2H and CECR2. LUZP1 is detected as part of the CERF-5 complex in embryonic stem cells where it is involved in complex stabilization but is not detected in the complex in the testis. Within the complex interacts with CECR2. Component of the RSF-5 ISWI chromatin-remodeling complex (also called the RSF complex) at least composed of SMARCA5/SNF2H and RSF1. Within the complex interacts with RSF1. Interacts with the cohesin complex component RAD21; the interaction is direct. Interacts with the NuRD complex components HDAC2, RBBP4 and CHD4; the interactions are direct. Interacts with PCNA. Component of the B-WICH complex, at least composed of SMARCA5/SNF2H, BAZ1B/WSTF, SF3B1, DEK, MYO1C, ERCC6, MYBBP1A and DDX21 which positively regulates RNA polymerase III transcription. Interacts with MYO1C. Interacts with BEND3. Interacts with SIRT6; promoting recruitment to DNA damage sites. In terms of assembly, (Microbial infection) Interacts with JC virus small t antigen. (Microbial infection) Interacts with Epstein Barr virus (EBV) lytic switch protein BZLF1; this interaction participates to the activation of early lytic viral genes by BZLF1. Ubiquitously expressed.

It localises to the nucleus. Its subcellular location is the chromosome. It carries out the reaction ATP + H2O = ADP + phosphate + H(+). Functionally, ATPase that possesses intrinsic ATP-dependent nucleosome-remodeling activity. Catalytic subunit of ISWI chromatin-remodeling complexes, which form ordered nucleosome arrays on chromatin and facilitate access to DNA during DNA-templated processes such as DNA replication, transcription, and repair; this may require intact histone H4 tails. Within the ISWI chromatin-remodeling complexes, slides edge- and center-positioned histone octamers away from their original location on the DNA template. Catalytic activity and histone octamer sliding propensity is regulated and determined by components of the ISWI chromatin-remodeling complexes. The BAZ1A/ACF1-, BAZ1B/WSTF-, BAZ2A/TIP5- and BAZ2B-containing ISWI chromatin-remodeling complexes regulate the spacing of nucleosomes along the chromatin and have the ability to slide mononucleosomes to the center of a DNA template in an ATP-dependent manner. The CECR2- and RSF1-containing ISWI chromatin-remodeling complexes do not have the ability to slide mononucleosomes to the center of a DNA template. Binds to core histones together with RSF1, and is required for the assembly of regular nucleosome arrays by the RSF-5 ISWI chromatin-remodeling complex. Involved in DNA replication and together with BAZ1A/ACF1 is required for replication of pericentric heterochromatin in S-phase. Probably plays a role in repression of RNA polymerase I dependent transcription of the rDNA locus, through the recruitment of the SIN3/HDAC1 corepressor complex to the rDNA promoter. Essential component of the WICH-5 ISWI chromatin-remodeling complex (also called the WICH complex), a chromatin-remodeling complex that mobilizes nucleosomes and reconfigures irregular chromatin to a regular nucleosomal array structure. The WICH-5 ISWI chromatin-remodeling complex regulates the transcription of various genes, has a role in RNA polymerase I transcription. Within the B-WICH complex has a role in RNA polymerase III transcription. Mediates the histone H2AX phosphorylation at 'Tyr-142', and is involved in the maintenance of chromatin structures during DNA replication processes. Essential component of NoRC-5 ISWI chromatin-remodeling complex, a complex that mediates silencing of a fraction of rDNA by recruiting histone-modifying enzymes and DNA methyltransferases, leading to heterochromatin formation and transcriptional silencing. This is SWI/SNF-related matrix-associated actin-dependent regulator of chromatin subfamily A member 5 from Homo sapiens (Human).